Here is a 156-residue protein sequence, read N- to C-terminus: Deoxyuridine 5'-triphosphate nucleotidohydrolase (156 aa).

Substrate contacts are provided by residues 76-78, Asn-89, 93-95, and Lys-103; these read RSG and TVD.

Belongs to the dUTPase family. Requires Mg(2+) as cofactor.

It carries out the reaction dUTP + H2O = dUMP + diphosphate + H(+). It functions in the pathway pyrimidine metabolism; dUMP biosynthesis; dUMP from dCTP (dUTP route): step 2/2. Functionally, this enzyme is involved in nucleotide metabolism: it produces dUMP, the immediate precursor of thymidine nucleotides and it decreases the intracellular concentration of dUTP so that uracil cannot be incorporated into DNA. This is Deoxyuridine 5'-triphosphate nucleotidohydrolase from Rhizobium johnstonii (strain DSM 114642 / LMG 32736 / 3841) (Rhizobium leguminosarum bv. viciae).